The chain runs to 1456 residues: RNA replication protein (1456 aa).

One can recognise an Alphavirus-like MT domain in the interval 59 to 224 (NPYSIELHTH…HHEFTDLQWL (166 aa)). Disordered stretches follow at residues 474 to 499 (DLAGMRGNNQEETSTAPREPEGEKKE), 513 to 563 (RKHN…DLPG), and 581 to 600 (QKWEDASSTDSSTIDPTEII). A compositionally biased stretch (polar residues) spans 480 to 489 (GNNQEETSTA). The segment covering 513–528 (RKHNRETRSRAAKKAK) has biased composition (basic residues). Basic and acidic residues predominate over residues 529-547 (RLAEIQDSMNRDRTEEGSH). Over residues 586–595 (ASSTDSSTID) the composition is skewed to polar residues. The region spanning 695-862 (DVKNKRIGAI…VFAKYCRYYL (168 aa)) is the (+)RNA virus helicase ATP-binding domain. 735–742 (GAGGSGKS) is a binding site for ATP. In terms of domain architecture, (+)RNA virus helicase C-terminal spans 863–997 (NATHRNKKDL…VVREHALKEY (135 aa)). The RdRp catalytic domain maps to 1236 to 1343 (RPSLANDYTA…DCVPEVKQSF (108 aa)).

The protein belongs to the potexvirus/carlavirus RNA replication protein family.

The enzyme catalyses RNA(n) + a ribonucleoside 5'-triphosphate = RNA(n+1) + diphosphate. The catalysed reaction is ATP + H2O = ADP + phosphate + H(+). RNA replication. The central part of this protein possibly functions as an ATP-binding helicase. This chain is RNA replication protein, found in Brassica campestris (Field mustard).